The sequence spans 1734 residues: MMVFQSFILGNLVSLCMKIINSVVVVGLYYGFLTTFSIGPSYLFLLRARVMDEGEEGTEKKVSATTGFIAGQLMMFISIYYAPLHLALGRPHTITVLALPYLLFHFFWNNHKHFLDYGSTTRNEMRNLRIQCVFLNNLIFQLFNHFILPSSMLARLVNIYMFRCNNKMLFVTSSFVGWLIGHILFMKWVGLVLVWIQQNNSIRSNVLIRSNKYKFLVSELRNSMARIFSILLFITCVYYLGRMPSPIFTKKLKGTSETEERGGTKQDQEVSIEEAPFPSLFLDGNKENSNLEFFKIKKKEDYCLWFEKPFVTLVFDYKRWNRPNRYIKNDKIENTVRNEMSQYFFYTCQSDGKERISFTYPPSLSTFFEMIQKKIPSFTREKTASTQVSTYWSLINEEKKENLKKELLNRIEALDKGWSVENILEKTTRFCHNETKKEYLPKIYDPSLHGISRGRIKKLPPFKIITETYITNNIGGSWINKIHGILLKINYQKFEQTLEKFNRKSLSIEKKLYFFSEPQEEKIHSEEELKIFKFLFNVVRTDSNDQTLNRTNFIDFHEITKKVPRWSYKLIGELEELEGENEDNVPMEPGIRSRKGKRVVIFTDNQNSDQNDEMALIRYSQQSDFRREIIKGSMRSQRRKTVIWEFFQAKVHSPLFFDRIDKLFLFSFDIRGLKKKILRNFMWKNKKKKKIDKKEEEQSKIEEKRRIEIAETWDSFLFAQIIRGFLLITQSILRKYIILPLLIIMKNSVRMLLFQIPEWSEDLKDWKREMHVKCTYNGVQLSETEFPRNWLTDGIQIKILFPFYLKPWHKSKFQSSQKARLKKTKAKGEKNAFCFLTVWGMETELPFGSAQRKPSFFQPISKELKKRIKKLKTKPFLVLGIFKERATICLKVAKEIKNWILKNSLFIKVKRKNLSKPNKIPVFGPREIFELNETKKDSIMSNQMIYELSVQNKSMEWRNSSLSENKIKNLIDRIKTIRNQIEEISKEKENLTNSCNKLRYDSKIIESAKRIWQIFKRKNTRFIRKSIFFIKFCIEQLSIAIFLGISNIPRITTQLFFESTKTILNKYIYKNEEKVEKINKKKNTIYFISTIKNLISNKKKISYDLCSLSQAYVFYKLSQIQVSNFSKLKAVLEYNICITSFFVKNQIKDFFQEQGIFHYELKDKTFFNSEVNQWKNWLRSHYQYNLPQVAWARLVTQKWKTKITQDSLVLNPSLTKEDSYEKKKFDNSKKDNFFEANLLLNPKHNLKKDSIYNLFCYKSINSTEKKFDMSIGIALDNCLVSCFLEKYNIRGTGEIRHRKYLDWRILNFWFTKKVNIEPWVDTKSKKKYINTKVQNYQRIDKITKTSLANQKRNFFDWMGMNEEILNPCITNFEFFFFPEFLLFSSTYKTKPWVIPIKLLLFNFNENINVNKKITRKKTSFIPSNENKSLLFYNLNNEEKELADEVELESDNEKQINPESALSNQEKTIQEIYAESKKKKRQNKKQSKSNTEVELDLFLTRHSRFQLRWNCFFNQKILNNVKVYCLLIRLKNPNEIAISSIERGEMSLDILMIEKNFTLAKLMKKGILIIEPVRLSVQNNGQLIIYRTIGISLVQKNKHKISKRYKKKIEKSITKYQKKTVNRKKNHYDFFVPENILSPKRRREFRILICFNLKKKNASDRNSRFDKNIQNLTTVLHKKKDLDKDQNNLIKFKSFLWPNFRLEDLACMNRYWFNTTNGNHFSMIRIHMYTRFPIH.

6 helical membrane passes run 19 to 39 (IINSVVVVGLYYGFLTTFSIG), 68 to 88 (FIAGQLMMFISIYYAPLHLAL), 91 to 111 (PHTITVLALPYLLFHFFWNNH), 133 to 153 (VFLNNLIFQLFNHFILPSSML), 176 to 196 (VGWLIGHILFMKWVGLVLVWI), and 227 to 247 (IFSILLFITCVYYLGRMPSPI). The stretch at 1433-1485 (NLNNEEKELADEVELESDNEKQINPESALSNQEKTIQEIYAESKKKKRQNKKQ) forms a coiled coil.

It belongs to the TIC214 family. In terms of assembly, part of the Tic complex.

The protein localises to the plastid. It localises to the chloroplast inner membrane. In terms of biological role, involved in protein precursor import into chloroplasts. May be part of an intermediate translocation complex acting as a protein-conducting channel at the inner envelope. This chain is Protein TIC 214, found in Lepidium virginicum (Virginia pepperweed).